A 499-amino-acid polypeptide reads, in one-letter code: Glycerol kinase (499 aa).

Residue threonine 13 participates in ADP binding. ATP contacts are provided by threonine 13, threonine 14, and serine 15. Threonine 13 lines the sn-glycerol 3-phosphate pocket. Position 17 (arginine 17) interacts with ADP. Sn-glycerol 3-phosphate contacts are provided by arginine 83, glutamate 84, tyrosine 136, and aspartate 246. Residues arginine 83, glutamate 84, tyrosine 136, aspartate 246, and glutamine 247 each contribute to the glycerol site. ADP-binding residues include threonine 268 and glycine 311. ATP contacts are provided by threonine 268, glycine 311, glutamine 315, and glycine 412. 2 residues coordinate ADP: glycine 412 and asparagine 416.

This sequence belongs to the FGGY kinase family.

The enzyme catalyses glycerol + ATP = sn-glycerol 3-phosphate + ADP + H(+). It functions in the pathway polyol metabolism; glycerol degradation via glycerol kinase pathway; sn-glycerol 3-phosphate from glycerol: step 1/1. Its activity is regulated as follows. Inhibited by fructose 1,6-bisphosphate (FBP). In terms of biological role, key enzyme in the regulation of glycerol uptake and metabolism. Catalyzes the phosphorylation of glycerol to yield sn-glycerol 3-phosphate. The protein is Glycerol kinase of Francisella philomiragia subsp. philomiragia (strain ATCC 25017 / CCUG 19701 / FSC 153 / O#319-036).